Reading from the N-terminus, the 130-residue chain is Small ribosomal subunit protein uS9 (130 aa).

The protein belongs to the universal ribosomal protein uS9 family.

The sequence is that of Small ribosomal subunit protein uS9 from Shigella sonnei (strain Ss046).